The sequence spans 549 residues: Alpha-amylase (549 aa).

Positions methionine 1–alanine 34 are cleaved as a signal peptide. Residues aspartate 139, aspartate 196, alanine 218, aspartate 220, aspartate 231, and aspartate 237 each coordinate Ca(2+). Residue aspartate 196 coordinates Na(+). The Na(+) site is built by aspartate 220, aspartate 231, aspartate 237, and leucine 238. Residue aspartate 239 coordinates Ca(2+). Aspartate 268 serves as the catalytic Nucleophile. Ca(2+) is bound at residue histidine 272. Catalysis depends on glutamate 298, which acts as the Proton donor. The Ca(2+) site is built by glycine 337, phenylalanine 339, serine 440, aspartate 441, and aspartate 464.

Belongs to the glycosyl hydrolase 13 family. Monomer. The cofactor is Ca(2+). Na(+) is required as a cofactor.

Its subcellular location is the secreted. It carries out the reaction Endohydrolysis of (1-&gt;4)-alpha-D-glucosidic linkages in polysaccharides containing three or more (1-&gt;4)-alpha-linked D-glucose units.. In Geobacillus stearothermophilus (Bacillus stearothermophilus), this protein is Alpha-amylase (amyS).